Consider the following 302-residue polypeptide: Glycine--tRNA ligase alpha subunit (302 aa).

The protein belongs to the class-II aminoacyl-tRNA synthetase family. Tetramer of two alpha and two beta subunits.

Its subcellular location is the cytoplasm. The enzyme catalyses tRNA(Gly) + glycine + ATP = glycyl-tRNA(Gly) + AMP + diphosphate. The polypeptide is Glycine--tRNA ligase alpha subunit (Xanthomonas euvesicatoria pv. vesicatoria (strain 85-10) (Xanthomonas campestris pv. vesicatoria)).